A 391-amino-acid polypeptide reads, in one-letter code: Elongation factor Tu (391 aa).

The tr-type G domain maps to 10–201 (KPHVNIGTIG…AVDDYIPTPE (192 aa)). The segment at 19 to 26 (GHVDHGKT) is G1. Residue 19–26 (GHVDHGKT) coordinates GTP. Position 26 (Thr-26) interacts with Mg(2+). The segment at 55 to 59 (GITIS) is G2. The G3 stretch occupies residues 76 to 79 (DCPG). Residues 76–80 (DCPGH) and 131–134 (NKVD) each bind GTP. Residues 131–134 (NKVD) are G4. The G5 stretch occupies residues 169–171 (SAL).

This sequence belongs to the TRAFAC class translation factor GTPase superfamily. Classic translation factor GTPase family. EF-Tu/EF-1A subfamily. Monomer.

The protein resides in the cytoplasm. The enzyme catalyses GTP + H2O = GDP + phosphate + H(+). Functionally, GTP hydrolase that promotes the GTP-dependent binding of aminoacyl-tRNA to the A-site of ribosomes during protein biosynthesis. The polypeptide is Elongation factor Tu (Paracoccus denitrificans (strain Pd 1222)).